A 1025-amino-acid polypeptide reads, in one-letter code: MKQASISRFFKKVSAVNKEKVDQVKEVEKEAEVDEVLDLTLDSENDEEQQQETPVLEPIDGEEHPTVSKVPDLNDSRLLQKQKILNASKDITNSVDVSAFNEKLKDIMNKRKLGRIKGSLIDESDEIAEQSEADEHNIKKKRKKSDQLTPLDRQVKDLKLGNMDKVLVIRVGYKYKIFAQDAIIASTILHLQLIPGKVTIDDSNPNDSKYKQFAYCSFPDVRLKVHLERLVRSGLKVAVVEQSETATTKKFDNSKAKTSVFERKITGTYSKATYATNCEFEVNHENILGTNNSIWALDIEVSDSIYKYYLWSIQLSNGEVIYDSFEESKDNFSKVETRMKYLNPSEIVSPVVDSFPIKLKKRFLDLQLCQKNYDILAEDLNIPKKELLNNRLIELWHILYRYLKEYSNEKLLNIGSNYRHFSQKISIQLQAQTINNLDLISNDDSKGTLFWILDHTRTPFGKRLLKEWLLRPLLSKDAIVDRLNAIDCILESANSIFFESLNQMMKGIPDLLRTINRVSFGKTSQREVYFLLKQLTGVIKHFEAHKDYIEVEINSNSGAIKTKSTKLASIMTQMFEFSLSSVIPQLLLMINVSAVMEKDQKKQLLGFFHLNNYDNSENIIKMQRDIDSVKAQLHDELQNIKKILKRPHLAYKDEVDFLIEVRNTQVKGIPSDWVKVNNTKMISRFLTPRTKELVELLEYQNDLLYNEISKEYDQFLNRIASYYNEVKTFIMNLAEYDCLLSLAAVSCNVGYTRPVFTDSNEQLIIAKQARNPIIESLGVDYVPNDIEMEKDSGRVLVITGPNMGGKSSYIRQIALMVIMAQIGSYVPAESLKLSVFDNVLTRIGSQDNILQGQSTFKVELSETVEIINSCTSKTLLLLDEVGRGTSTRDGNAIAWALIKYFVEEEQCPFILFTTHFTIVTTVKSPLLKSYHMNYVQHKNENENWTTVVFLYQLKAGVTDSSYGLNVAKLAGIDTHIINRAHDVAISYKNDTEFDTNMILFQKVRNILANRTTARETLKVLLELDV.

Residues 41–50 show a composition bias toward acidic residues; the sequence is LDSENDEEQQ. 2 disordered regions span residues 41–70 and 127–146; these read LDSE…VSKV and IAEQ…KKSD. The interval 142 to 272 is mispair-binding domain; that stretch reads RKKSDQLTPL…RKITGTYSKA (131 aa). 800–807 contributes to the ATP binding site; that stretch reads GPNMGGKS.

This sequence belongs to the DNA mismatch repair MutS family. MSH3 subfamily. Heterodimer consisting of MSH2-MSH3 (MutS beta). Forms a ternary complex with MutL alpha (MLH1-PMS1).

Its subcellular location is the nucleus. In terms of biological role, component of the post-replicative DNA mismatch repair system (MMR). Heterodimerizes with MSH2 to form MutS beta, which binds to DNA mismatches thereby initiating DNA repair. MSH3 provides substrate-binding and substrate specificity to the complex. When bound, the MutS beta heterodimer bends the DNA helix and shields approximately 20 base pairs. Acts mainly to repair insertion-deletion loops (IDLs) from 2 to 13 nucleotides in size, but can also repair base-base and single insertion-deletion mismatches that occur during replication. After mismatch binding, forms a ternary complex with the MutL alpha heterodimer, which is thought to be responsible for directing the downstream MMR events, including strand discrimination, excision, and resynthesis. ATP binding and hydrolysis play a pivotal role in mismatch repair functions. This is DNA mismatch repair protein MSH3 (MSH3) from Candida glabrata (strain ATCC 2001 / BCRC 20586 / JCM 3761 / NBRC 0622 / NRRL Y-65 / CBS 138) (Yeast).